Here is a 152-residue protein sequence, read N- to C-terminus: Ninjurin-1 (152 aa).

Met-1 carries the post-translational modification N-acetylmethionine. Over residues 1 to 10 (MESGTEEYEL) the composition is skewed to acidic residues. The interval 1-29 (MESGTEEYELNGDLRPGSPGSPDALPPRW) is disordered. Residues 1 to 78 (MESGTEEYEL…EQGNDFAFFV (78 aa)) are Extracellular-facing. Phosphoserine occurs at positions 18 and 21. Residues 26 to 37 (PPRWGLRNRPIN) are N-terminal adhesion motif. Residues 40-69 (HYANKKSAAESMLDIALLMANASQLKAVVE) form a required to induce plasma membrane rupture region. The helix alpha1 stretch occupies residues 44–55 (KKSAAESMLDIA). Residues 58 to 74 (MANASQLKAVVEQGNDF) form a helix alpha2 region. The N-linked (GlcNAc...) asparagine glycan is linked to Asn-60. Residues 79 to 103 (PLVVLISISLVLQIGVGVLLIFLVK) form a helical membrane-spanning segment. The Cytoplasmic segment spans residues 104–113 (YDLNNPAKHA). A helical membrane pass occupies residues 114–138 (KLDFLNNLATGLVFIIVVVNIFITA). Topologically, residues 139-152 (FGVQKPVMDVAPRQ) are extracellular.

The protein belongs to the ninjurin family. Homodimer; in absence of death stimuli, forms an inactive homodimer. Homooligomer; in response to death stimuli, homooligomerizes into long, highly branched filaments and large, ring-shaped structures in the membrane. In terms of processing, cleaved by MMP9 protease to generate the Secreted ninjurin-1 form. N-linked glycosylation is required for homooligomerization.

The protein resides in the cell membrane. Its subcellular location is the synaptic cell membrane. It is found in the secreted. In response to death stimuli, homooligomerizes and disrupts membrane integrity by introducing the hydrophilic faces of alpha1 and alpha2 helices into the hydrophobic membrane. Homooligomerization and ability to mediate plasma membrane rupture is inhibited by glycine; it is unclear whether glycine directly or indirectly inhibits homooligomerization. In normal conditions, NINJ1 is autoinhibited via formation of a homodimer: in the inactive homodimer, the alpha1 and alpha2 helices (residues 44-74) form a single transmembrane region without a kink, in which hydrophilic faces of alpha1 and alpha2 helices are sequestered. Effector of various programmed cell death, such as pyroptosis and necroptosis, which mediates plasma membrane rupture (cytolysis). Oligomerizes in response to death stimuli and forms ring-like structures on the plasma membrane: acts by cutting and shedding membrane disks, like a cookie cutter, leading to membrane damage and loss that cannot be repaired by the cell. Plasma membrane rupture leads to release intracellular molecules named damage-associated molecular patterns (DAMPs) that propagate the inflammatory response. Mechanistically, mediates plasma membrane rupture by introducing hydrophilic faces of 2 alpha helices into the hydrophobic membrane. Induces plasma membrane rupture downstream of Gasdermin (GSDMA, GSDMB, GSDMC, GSDMD, or GSDME) or MLKL during pyroptosis or necroptosis, respectively. Acts as an effector of PANoptosis downstream of CASP1, CASP4, CASP8 and RIPK3. Also induces plasma membrane rupture in response to cell swelling caused by osmotic stress and ferroptosis downstream of lipid peroxidation. Acts as a regulator of Toll-like receptor 4 (TLR4) signaling triggered by lipopolysaccharide (LPS) during systemic inflammation; directly binds LPS. Involved in leukocyte migration during inflammation by promoting transendothelial migration of macrophages via homotypic binding. Promotes the migration of monocytes across the brain endothelium to central nervous system inflammatory lesions. Also acts as a homophilic transmembrane adhesion molecule involved in various processes such as axonal growth, cell chemotaxis and angiogenesis. Promotes cell adhesion by mediating homophilic interactions via its extracellular N-terminal adhesion motif (N-NAM). Involved in the progression of the inflammatory stress by promoting cell-to-cell interactions between immune cells and endothelial cells. Plays a role in nerve regeneration by promoting maturation of Schwann cells. Acts as a regulator of angiogenesis. Promotes the formation of new vessels by mediating the interaction between capillary pericyte cells and endothelial cells. Also mediates vascular functions in penile tissue as well as vascular formation. Promotes osteoclasts development by enhancing the survival of prefusion osteoclasts. Also involved in striated muscle growth and differentiation. Also involved in cell senescence in a p53/TP53 manner, possibly by acting as an indirect regulator of p53/TP53 mRNA translation. In terms of biological role, secreted form generated by cleavage, which has chemotactic activity. Acts as an anti-inflammatory mediator by promoting monocyte recruitment, thereby ameliorating atherosclerosis. This is Ninjurin-1 from Mus musculus (Mouse).